A 548-amino-acid chain; its full sequence is Membrane protein insertase YidC (548 aa).

The chain crosses the membrane as a helical span at residues asparagine 6–aspartate 26. Residues asparagine 28 to alanine 54 are disordered. Residues proline 29 to threonine 42 show a composition bias toward low complexity. Transmembrane regions (helical) follow at residues phenylalanine 350–tyrosine 370, phenylalanine 424–isoleucine 444, leucine 458–isoleucine 478, and proline 499–valine 519.

The protein belongs to the OXA1/ALB3/YidC family. Type 1 subfamily. In terms of assembly, interacts with the Sec translocase complex via SecD. Specifically interacts with transmembrane segments of nascent integral membrane proteins during membrane integration.

The protein resides in the cell inner membrane. Required for the insertion and/or proper folding and/or complex formation of integral membrane proteins into the membrane. Involved in integration of membrane proteins that insert both dependently and independently of the Sec translocase complex, as well as at least some lipoproteins. Aids folding of multispanning membrane proteins. In Salmonella arizonae (strain ATCC BAA-731 / CDC346-86 / RSK2980), this protein is Membrane protein insertase YidC.